A 609-amino-acid chain; its full sequence is Meiotically up-regulated gene 28 protein (609 aa).

RRM domains follow at residues isoleucine 20 to isoleucine 103 and cysteine 419 to lysine 499.

It is found in the cytoplasm. Its function is as follows. Has a role in sporulation. The polypeptide is Meiotically up-regulated gene 28 protein (mug28) (Schizosaccharomyces pombe (strain 972 / ATCC 24843) (Fission yeast)).